We begin with the raw amino-acid sequence, 204 residues long: Large ribosomal subunit protein eL15 (204 aa).

It belongs to the eukaryotic ribosomal protein eL15 family. In terms of assembly, component of the large ribosomal subunit.

It is found in the cytoplasm. In terms of biological role, component of the large ribosomal subunit. The ribosome is a large ribonucleoprotein complex responsible for the synthesis of proteins in the cell. This Silurus meridionalis (Southern catfish) protein is Large ribosomal subunit protein eL15 (rpl15).